The following is a 360-amino-acid chain: Flavin-dependent trigonelline monooxygenase, oxygenase component (360 aa).

The protein belongs to the bacterial luciferase oxidoreductase family. In terms of assembly, homodimer. The trigonelline monooxygenase is composed of a reductase component TgnA and an oxygenase component TgnB.

It carries out the reaction N-methylnicotinate + FMNH2 + O2 = (Z)-2-((N-methylformamido)methylene)-5-hydroxybutanolactone + FMN + H(+). It catalyses the reaction N-methylnicotinate + FADH2 + O2 = (Z)-2-((N-methylformamido)methylene)-5-hydroxybutanolactone + FAD + H(+). Functionally, involved in the degradation of the pyridine ring of trigonelline (TG; N-methylnicotinate) into succinate and methylamine as carbon and nitrogen sources, respectively. Catalyzes the insertion of two oxygens, followed by a ring cleavage of trigonelline to yield (Z)-2-((N-methylformamido)methylene)-5-hydroxybutyrolactone (MFMB). It is able to use reduced FMN or FAD. The chain is Flavin-dependent trigonelline monooxygenase, oxygenase component from Acinetobacter baylyi (strain ATCC 33305 / BD413 / ADP1).